The following is a 1360-amino-acid chain: NAD(+) hydrolase sarm1 (1360 aa).

The interval 27–52 is disordered; that stretch reads RITGGPGSISTTSASAITAPSTMSQT. Residues 34–48 show a composition bias toward low complexity; that stretch reads SISTTSASAITAPST. SAM domains follow at residues 690-754 and 760-828; these read WSVE…LKRM and KDTA…NSLP. The region spanning 837–981 is the TIR domain; sequence KTLDVFVSYR…KLERFLRGEK (145 aa). NAD(+) contacts are provided by residues 846–847 and Glu876; that span reads RR. The active site involves Glu919. The segment covering 997 to 1010 has biased composition (polar residues); sequence VSYQRMHSNDSDYQ. Disordered stretches follow at residues 997–1026, 1046–1085, 1121–1148, 1192–1217, and 1249–1343; these read VSYQ…GGGG, GQAN…SQIL, SAAG…LLDQ, NDSV…KSRS, and IPMT…GNNK. Gly residues predominate over residues 1012-1026; it reads GGAGAGSGAGTGGGG. A compositionally biased stretch (polar residues) spans 1046 to 1073; the sequence is GQANHQANRYRQSPSPARQRGSTSQLSG. The span at 1125-1135 shows a compositional bias: gly residues; that stretch reads LGHGSGSGMGS. Low complexity predominate over residues 1321 to 1335; that stretch reads SLTSNKTSNSSLGSN.

Belongs to the SARM1 family. As to expression, widely expressed in larval brains and adult brains.

The protein resides in the cytoplasm. It is found in the cell projection. Its subcellular location is the axon. The catalysed reaction is NAD(+) + H2O = ADP-D-ribose + nicotinamide + H(+). The enzyme catalyses NAD(+) = cyclic ADP-beta-D-ribose + nicotinamide + H(+). NAD(+) hydrolase, which plays a key role in axonal degeneration following injury by regulating NAD(+) metabolism. Acts as a negative regulator of MYD88- and TRIF-dependent toll-like receptor signaling pathway by promoting Wallerian degeneration, an injury-induced form of programmed subcellular death which involves degeneration of an axon distal to the injury site. Wallerian degeneration is triggered by NAD(+) depletion: in response to injury, it is activated and catalyzes cleavage of NAD(+) into ADP-D-ribose (ADPR), cyclic ADPR (cADPR) and nicotinamide; NAD(+) cleavage promoting axon destruction. Involved in the down-regulation of the tracheal immune response to Gram-negative bacteria. This is likely by mediating Tollo signaling in the tracheal epithelium. The sequence is that of NAD(+) hydrolase sarm1 from Drosophila melanogaster (Fruit fly).